A 319-amino-acid chain; its full sequence is MNPNYLDFEQPIADLEAKIQELRTASAGPSVNVDTEVRALENKLRLRTAQIFRNLSAWQISQLARHPRRPYTLDYISVVCDEFQELAGDRTLADDKAIVGGLARIGHRPVMLIGHQKGRDNKERLMRNFGMPKPEGYRKALRLMKLAERFGLPLLTFIDTMGAWPGIDAEERNQSEAIATNLIEMAELKIPVICTVIGEGGSGGALAIGIGDRTLMLEYSTYSVITPEGCASILWKDAAKASDAAEQLNLTARRLKEFGLIDKVIREPIGGAHRNPQQMANRLKAVLLNELEALDKVPLVTLLNQRHKRLRTYGAYENH.

The 262-residue stretch at Asn32 to Ala293 folds into the CoA carboxyltransferase C-terminal domain.

This sequence belongs to the AccA family. Acetyl-CoA carboxylase is a heterohexamer composed of biotin carboxyl carrier protein (AccB), biotin carboxylase (AccC) and two subunits each of ACCase subunit alpha (AccA) and ACCase subunit beta (AccD).

It localises to the cytoplasm. It catalyses the reaction N(6)-carboxybiotinyl-L-lysyl-[protein] + acetyl-CoA = N(6)-biotinyl-L-lysyl-[protein] + malonyl-CoA. Its pathway is lipid metabolism; malonyl-CoA biosynthesis; malonyl-CoA from acetyl-CoA: step 1/1. In terms of biological role, component of the acetyl coenzyme A carboxylase (ACC) complex. First, biotin carboxylase catalyzes the carboxylation of biotin on its carrier protein (BCCP) and then the CO(2) group is transferred by the carboxyltransferase to acetyl-CoA to form malonyl-CoA. The protein is Acetyl-coenzyme A carboxylase carboxyl transferase subunit alpha of Xylella fastidiosa (strain M12).